The chain runs to 1764 residues: Nucleolar pre-ribosomal-associated protein 1 (1764 aa).

Residues 1–23 form a disordered region; that stretch reads MSNHSEAYGSRDQRREKYTQGKE. Basic and acidic residues predominate over residues 9–23; that stretch reads GSRDQRREKYTQGKE.

As to quaternary structure, associates with pre-60S ribosomal particles. Predominantly associated with the 27SA2 pre-rRNA. Can associate with a subset of box H/ACA and box C/D small nucleolar RNPs (snoRNPs) required for peptidyl transferase center modification and with small RNAs snR37 and snR42. Interacts with URB2. Together with DBP6, NOP8, URB2 and RSA3, forms an RNA-independent complex, which is required during early maturation of nascent 60S ribosomal subunits.

It localises to the nucleus. The protein resides in the nucleolus. Required for 60S ribosomal subunit formation and pre-rRNA processing. Required for normal accumulation of 25S and 5.8S rRNAs. This Saccharomyces cerevisiae (strain ATCC 204508 / S288c) (Baker's yeast) protein is Nucleolar pre-ribosomal-associated protein 1 (URB1).